We begin with the raw amino-acid sequence, 61 residues long: Small ribosomal subunit protein uS14 (61 aa).

The Zn(2+) site is built by Cys-24, Cys-27, Cys-40, and Cys-43.

The protein belongs to the universal ribosomal protein uS14 family. Zinc-binding uS14 subfamily. In terms of assembly, part of the 30S ribosomal subunit. Contacts proteins S3 and S10. Zn(2+) serves as cofactor.

In terms of biological role, binds 16S rRNA, required for the assembly of 30S particles and may also be responsible for determining the conformation of the 16S rRNA at the A site. This is Small ribosomal subunit protein uS14 from Campylobacter concisus (strain 13826).